The following is a 304-amino-acid chain: MDSSSFSFSHLDRLEAESIYILREVVAEFRNPVLLYSVGKDSSVLLHLLLKAFAPAPPPIPLLHVDTRWKFREMIAFRDRRVAETGVQLRVHINLEGVAQEINPITHGAAVHTDIMKTQGLRQALEQGQFDAAIGGARRDEEKSRAKERVFSFRNAHHRWDPKNQRPELWNVYNARIHPGESVRVFPLSNWTELDVWLYIYREQIPVVSLYFAAPRPVVERDGMLILVDDERLPLHPGEVSKLRWVRFRTLGCYPLTGAVESRAATLEDIIAEMLVTPFSERQGRLIDYAPGASMESKKIEGYF.

The protein belongs to the PAPS reductase family. CysD subfamily. Heterodimer composed of CysD, the smaller subunit, and CysNC.

It catalyses the reaction sulfate + ATP + H(+) = adenosine 5'-phosphosulfate + diphosphate. The protein operates within sulfur metabolism; hydrogen sulfide biosynthesis; sulfite from sulfate: step 1/3. Its function is as follows. With CysN forms the ATP sulfurylase (ATPS) that catalyzes the adenylation of sulfate producing adenosine 5'-phosphosulfate (APS) and diphosphate, the first enzymatic step in sulfur assimilation pathway. APS synthesis involves the formation of a high-energy phosphoric-sulfuric acid anhydride bond driven by GTP hydrolysis by CysN coupled to ATP hydrolysis by CysD. The chain is Sulfate adenylyltransferase subunit 2 from Xylella fastidiosa (strain Temecula1 / ATCC 700964).